Consider the following 193-residue polypeptide: MRKLWGLYLGLLDNHPLVTKSLSTGFLMGTGDILAQRLEHKFKDEKSQFKLDYKRVATMSTVGIFYSGPMLHYWYRSLDIMVKGEGRSVIIKKMLIDQLLFAPVAIGGFMTVTNFINNKGELKNLENFTKELFYAVKINWLIWPAAQIINFSLVPPNLRVLYSSIISIFWGMFLSHISFDKDHHIRNQNKEIN.

4 consecutive transmembrane segments (helical) span residues 56-78, 96-116, 132-152, and 160-180; these read VATMSTVGIFYSGPMLHYWYRSL, IDQLLFAPVAIGGFMTVTNFI, LFYAVKINWLIWPAAQIINFS, and VLYSSIISIFWGMFLSHISFD.

This sequence belongs to the peroxisomal membrane protein PXMP2/4 family.

The protein localises to the membrane. This chain is PXMP2/4 family protein 2, found in Dictyostelium discoideum (Social amoeba).